The following is a 248-amino-acid chain: MRETDEQPVAGGAASTEGLETSIGYRFTDRRFLDEALTHRSWLNEVRSPTVPDNERLEFFGDAILGFCIGKMLLRHYPESREGALARMKSALVGEETLADLAAAVELGSYLRLGRGEERSGGRHRRSLLANALEALLAAMYLDGGMAPVERLVDAWFGPRLAGVAAGIKGRDFKTDFQELAQAQYGGLPRYVLVDTSGPAHDLRFTVAAYVGERLLGQGTGRSKKEAEQAAARQCLERLETGRCSAAP.

Residues 16 to 145 enclose the RNase III domain; that stretch reads TEGLETSIGY…LLAAMYLDGG (130 aa). E58 provides a ligand contact to Mg(2+). Residue D62 is part of the active site. Positions 131 and 134 each coordinate Mg(2+). The active site involves E134. The 70-residue stretch at 172 to 241 folds into the DRBM domain; that stretch reads DFKTDFQELA…ARQCLERLET (70 aa).

This sequence belongs to the ribonuclease III family. Homodimer. Mg(2+) is required as a cofactor.

The protein resides in the cytoplasm. The enzyme catalyses Endonucleolytic cleavage to 5'-phosphomonoester.. In terms of biological role, digests double-stranded RNA. Involved in the processing of primary rRNA transcript to yield the immediate precursors to the large and small rRNAs (23S and 16S). Processes some mRNAs, and tRNAs when they are encoded in the rRNA operon. Processes pre-crRNA and tracrRNA of type II CRISPR loci if present in the organism. The chain is Ribonuclease 3 from Geobacter sulfurreducens (strain ATCC 51573 / DSM 12127 / PCA).